A 310-amino-acid polypeptide reads, in one-letter code: Tagatose-6-phosphate kinase (310 aa).

It belongs to the carbohydrate kinase PfkB family. LacC subfamily.

It catalyses the reaction D-tagatofuranose 6-phosphate + ATP = D-tagatofuranose 1,6-bisphosphate + ADP + H(+). It functions in the pathway carbohydrate metabolism; D-tagatose 6-phosphate degradation; D-glyceraldehyde 3-phosphate and glycerone phosphate from D-tagatose 6-phosphate: step 1/2. This Staphylococcus aureus (strain Mu3 / ATCC 700698) protein is Tagatose-6-phosphate kinase.